The following is a 373-amino-acid chain: Flagellar P-ring protein (373 aa).

The N-terminal stretch at 1–26 (MKLFFRFVTLVAVLAMSLANVAPAWA) is a signal peptide.

Belongs to the FlgI family. The basal body constitutes a major portion of the flagellar organelle and consists of four rings (L,P,S, and M) mounted on a central rod.

Its subcellular location is the periplasm. It localises to the bacterial flagellum basal body. Its function is as follows. Assembles around the rod to form the L-ring and probably protects the motor/basal body from shearing forces during rotation. This chain is Flagellar P-ring protein, found in Rhizobium johnstonii (strain DSM 114642 / LMG 32736 / 3841) (Rhizobium leguminosarum bv. viciae).